Here is a 741-residue protein sequence, read N- to C-terminus: Ribosome-releasing factor 2, mitochondrial (741 aa).

The transit peptide at 1–29 (MLKYEFLHGLQKRSHYLRQLSGQFFSRSY) directs the protein to the mitochondrion. Positions 31-310 (SKIRNIGILA…AVNSYLPAPE (280 aa)) constitute a tr-type G domain. GTP is bound by residues 40–47 (AHIDAGKT), 104–108 (DTPGH), and 158–161 (NKMD).

The protein belongs to the TRAFAC class translation factor GTPase superfamily. Classic translation factor GTPase family. EF-G/EF-2 subfamily.

The protein resides in the mitochondrion. Its function is as follows. Mitochondrial GTPase that mediates the disassembly of ribosomes from messenger RNA at the termination of mitochondrial protein biosynthesis. Not involved in the GTP-dependent ribosomal translocation step during translation elongation. This chain is Ribosome-releasing factor 2, mitochondrial, found in Drosophila ananassae (Fruit fly).